We begin with the raw amino-acid sequence, 638 residues long: Dihydrolipoyllysine-residue acetyltransferase component of pyruvate dehydrogenase complex (638 aa).

2 Lipoyl-binding domains span residues 2-74 and 117-191; these read SEII…IELE and SQEV…LTLR. Lysine 40 is subject to N6-lipoyllysine. Over residues 90–117 the composition is skewed to low complexity; that stretch reads PAAPTQAVDEAEAPSPGASATPAPAAAS. Positions 90-119 are disordered; the sequence is PAAPTQAVDEAEAPSPGASATPAPAAASQE. An N6-lipoyllysine modification is found at lysine 157. Positions 201–220 are disordered; it reads APAAAAAASPAPAPLAPAAA. The Lipoyl-binding 3 domain occupies 222 to 296; that stretch reads PQEVKVPDIG…GTGDQILTLR (75 aa). Lysine 262 carries the post-translational modification N6-lipoyllysine. Residues 301-320 are compositionally biased toward low complexity; it reads APSGPRARGSPGQAAAAPGA. Residues 301–336 form a disordered region; it reads APSGPRARGSPGQAAAAPGAAPAPAPVGAPSRNGAK. One can recognise a Peripheral subunit-binding (PSBD) domain in the interval 338–375; sequence HAGPAVRQLAREFGVELAAINSTGPRGRILKEDVQAYV. The catalytic stretch occupies residues 382–638; sequence AKEAPAAGAA…LLADIRAILL (257 aa). Histidine 611 is a catalytic residue.

Belongs to the 2-oxoacid dehydrogenase family. Forms a 24-polypeptide structural core with octahedral symmetry. (R)-lipoate serves as cofactor.

It carries out the reaction N(6)-[(R)-dihydrolipoyl]-L-lysyl-[protein] + acetyl-CoA = N(6)-[(R)-S(8)-acetyldihydrolipoyl]-L-lysyl-[protein] + CoA. Functionally, the pyruvate dehydrogenase complex catalyzes the overall conversion of pyruvate to acetyl-CoA and CO(2). It contains multiple copies of three enzymatic components: pyruvate dehydrogenase (E1), dihydrolipoamide acetyltransferase (E2) and lipoamide dehydrogenase (E3). The sequence is that of Dihydrolipoyllysine-residue acetyltransferase component of pyruvate dehydrogenase complex from Azotobacter vinelandii.